We begin with the raw amino-acid sequence, 228 residues long: A-type ATP synthase subunit D (228 aa).

Over residues 205–214 (KKEEEEKAEA) the composition is skewed to basic and acidic residues. The disordered stretch occupies residues 205 to 228 (KKEEEEKAEAAAEAAAVEDPEPAD).

The protein belongs to the V-ATPase D subunit family. Has multiple subunits with at least A(3), B(3), C, D, E, F, H, I and proteolipid K(x).

Its subcellular location is the cell membrane. Component of the A-type ATP synthase that produces ATP from ADP in the presence of a proton gradient across the membrane. The chain is A-type ATP synthase subunit D from Halorubrum lacusprofundi (strain ATCC 49239 / DSM 5036 / JCM 8891 / ACAM 34).